The chain runs to 3033 residues: Genome polyprotein (3033 aa).

Serine 2 bears the N-acetylserine; by host mark. Residues 2–23 form an interaction with STAT1 region; sequence STNPKPQRKTKRNTNRRPQDVK. Positions 2–58 are interaction with EIF2AK2/PKR; the sequence is STNPKPQRKTKRNTNRRPQDVKFPGGGQIVGGVYLLPRRGPRLGVRATRKTSERSQP. Residues 2–59 are interaction with DDX3X; the sequence is STNPKPQRKTKRNTNRRPQDVKFPGGGQIVGGVYLLPRRGPRLGVRATRKTSERSQPR. The interval 2 to 75 is disordered; it reads STNPKPQRKT…PKDRRSAGKS (74 aa). Residues 2-168 lie on the Cytoplasmic side of the membrane; the sequence is STNPKPQRKT…EDGINYATGN (167 aa). 2 consecutive short sequence motifs (nuclear localization signal) follow at residues 5–13 and 38–43; these read PKPQRKTKR and PRRGPR. Residues 7-16 are compositionally biased toward basic residues; it reads PQRKTKRNTN. Over residues 32 to 47 the composition is skewed to low complexity; that stretch reads GGVYLLPRRGPRLGVR. The residue at position 53 (serine 53) is a Phosphoserine; by host. 2 consecutive short sequence motifs (nuclear localization signal) follow at residues 58 to 64 and 66 to 71; these read PRGRRQP and PKDRRS. A phosphoserine; by host mark is found at serine 99 and serine 116. Residues 112–152 are important for endoplasmic reticulum and mitochondrial localization; the sequence is PRHRSRNLGKVIDTLTCGFADLMGYIPVVGAPVGGVARALA. The interval 122–173 is interaction with APOA2; sequence VIDTLTCGFADLMGYIPVVGAPVGGVARALAHGVRVLEDGINYATGNLPGCS. The important for lipid droplets localization stretch occupies residues 164 to 167; that stretch reads YATG. Residues 169–189 form a helical membrane-spanning segment; that stretch reads LPGCSFSIFLLALLSCMSVPV. Residues 178-191 constitute a propeptide, ER anchor for the core protein, removed in mature form by host signal peptidase; sequence LLALLSCMSVPVSA. Topologically, residues 190 to 358 are lumenal; it reads SAVEVKNTSQ…TGAHWGVMFG (169 aa). Asparagine 196, asparagine 209, and asparagine 234 each carry an N-linked (GlcNAc...) asparagine; by host glycan. Residues 265 to 296 form an important for fusion region; that stretch reads IVVSATFCSALYIGDVCGAIMIAAQATIISPQ. N-linked (GlcNAc...) asparagine; by host glycosylation is present at asparagine 305. A helical transmembrane segment spans residues 359 to 379; it reads LAYFSMQGAWAKVVVILLLTA. Over 380–729 the chain is Lumenal; sequence GVDAQTHTIS…WEWVVLLFLL (350 aa). The interval 385–412 is HVR1; sequence THTISGHAARTTHGLVSLFTPGSQQNIQ. 3 N-linked (GlcNAc...) (high mannose) asparagine; by host glycosylation sites follow: asparagine 417, asparagine 423, and asparagine 430. 4 disulfide bridges follow: cysteine 429–cysteine 554, cysteine 452–cysteine 459, cysteine 488–cysteine 496, and cysteine 505–cysteine 510. The N-linked (GlcNAc...) asparagine; by host glycan is linked to asparagine 448. Residues 475–480 form an HVR2 region; it reads EENVTN. Residue asparagine 477 is glycosylated (N-linked (GlcNAc...) asparagine; by host). Positions 482–495 are CD81-binding 1; it reads DNMRPYCWHYPPRP. Asparagine 534 carries N-linked (GlcNAc...) asparagine; by host glycosylation. Residues 546–553 form a CD81-binding 2 region; sequence PPRGAWFG. Residue asparagine 558 is glycosylated (N-linked (GlcNAc...) asparagine; by host). Disulfide bonds link cysteine 566-cysteine 571, cysteine 585-cysteine 589, cysteine 601-cysteine 624, and cysteine 611-cysteine 648. N-linked (GlcNAc...) (high mannose) asparagine; by host glycosylation is found at asparagine 627 and asparagine 649. The cysteines at positions 656 and 681 are disulfide-linked. The segment at 664–675 is PKR/eIF2-alpha phosphorylation homology domain (PePHD); it reads SQLSPLLHSTTE. A helical membrane pass occupies residues 730–750; the sequence is LADARVCACLWMLLLLGQAEA. The Lumenal portion of the chain corresponds to 751–761; it reads ALEKLVILHAA. A helical transmembrane segment spans residues 762 to 782; it reads SAASSHGMLCFIIFFIAAWYI. At 783-786 the chain is on the cytoplasmic side; it reads KGRV. Residues 787-807 traverse the membrane as a helical segment; sequence TPLVTYSYLGMWSFSLLLLAL. Over 808 to 817 the chain is Lumenal; the sequence is PQQAYALDTT. The helical transmembrane segment at 818–838 threads the bilayer; that stretch reads EQGQIGLVLLVVISVFTLSPA. At 839-885 the chain is on the cytoplasmic side; sequence YKILLCRSLWWLSYLLVRAEALIQDWVPPWQARGGRDGIIWAATIFC. The helical transmembrane segment at 886 to 906 threads the bilayer; sequence PGVLFDITNWLLAILGPGYLL. One can recognise a Peptidase C18 domain in the interval 903-1030; it reads GYLLRSVLTS…EYTSKGWKLL (128 aa). At 907–932 the chain is on the lumenal side; that stretch reads RSVLTSTPYFVRAQALLRICAAVRHL. A protease NS2-3 region spans residues 908–1210; the sequence is SVLTSTPYFV…PIESLDVIIR (303 aa). Cysteine 926 carries the S-palmitoyl cysteine; by host lipid modification. The helical transmembrane segment at 933–953 threads the bilayer; that stretch reads SGGKYVQMMLLTLGKWTGTYI. Residues 933 to 953 are interaction with host SCPS1; it reads SGGKYVQMMLLTLGKWTGTYI. Topologically, residues 954-1661 are cytoplasmic; the sequence is YDHLSPMSGW…CMQADLEIMT (708 aa). Catalysis depends on for protease NS2 activity; shared with dimeric partner residues histidine 956, glutamate 976, and cysteine 997. Residues 1031–1212 form the Peptidase S29 domain; sequence APITAYAQQT…ESLDVIIRSP (182 aa). Residues histidine 1087 and aspartate 1111 each act as charge relay system; for serine protease NS3 activity in the active site. Residues cysteine 1127 and cysteine 1129 each contribute to the Zn(2+) site. The active-site Charge relay system; for serine protease NS3 activity is the serine 1169. Residues cysteine 1175 and histidine 1179 each contribute to the Zn(2+) site. The Helicase ATP-binding domain maps to 1221-1373; it reads PAVPQTYQVG…PNIEEVALGH (153 aa). 1234–1241 is a binding site for ATP; that stretch reads APTGSGKS. Mg(2+) contacts are provided by serine 1241 and glutamate 1321. Positions 1320–1323 match the DECH box motif; that stretch reads DECH. An RNA-binding region spans residues 1490-1502; the sequence is QRRGRTGRGRLGI. The chain crosses the membrane as a helical span at residues 1662-1682; that stretch reads STWVLAGGVLAAIAAYCLATG. The segment at 1683-1694 is NS3-binding; sequence CVVCIGRVNINQ. Residues 1683-1809 are Cytoplasmic-facing; sequence CVVCIGRVNI…ALTSPLPTST (127 aa). A helical transmembrane segment spans residues 1810–1830; sequence TILLNIMGGWLASQIAPAAGA. Residues 1831-1832 are Lumenal-facing; sequence TG. A helical membrane pass occupies residues 1833-1853; it reads FVVSGLVGAAVGSIGLGKILV. A topological domain (cytoplasmic) is located at residue aspartate 1854. A helical transmembrane segment spans residues 1855 to 1875; that stretch reads VLAGYGAGISGALVAFKIMSG. Residues 1876–1885 lie on the Lumenal side of the membrane; that stretch reads EKPSVEDVVN. Residues 1886 to 1906 form a helical membrane-spanning segment; the sequence is LLPGILSPGALVVGVICAAIL. Residues 1907–1976 are Cytoplasmic-facing; that stretch reads RRHVGQGEGA…WITEDCPVPC (70 aa). Residue cysteine 1976 is the site of S-palmitoyl cysteine; by host attachment. An intramembrane segment occupies 1977–2007; that stretch reads AGSWLRDIWDWACTILTDFKNWLSTKLLPKM. Topologically, residues 2008–3012 are cytoplasmic; sequence PGLPFISCQR…YHSVSRARPR (1005 aa). Zn(2+)-binding residues include cysteine 2015, cysteine 2033, cysteine 2035, and cysteine 2056. Residues 2124-2212 form an FKBP8-binding region; sequence EFFSWVDGVQ…ASSSASQLSA (89 aa). Residues 2124–2332 are transcriptional activation; it reads EFFSWVDGVQ…PTPPPRRRRA (209 aa). Residues 2139–2143 are interaction with non-structural protein 4A; that stretch reads PTPKP. The segment at 2193–2212 is disordered; it reads RLARGSPPSEASSSASQLSA. Residues 2193–2460 are interaction with host SKP2; sequence RLARGSPPSE…ALITPCGPEE (268 aa). Phosphoserine; by host occurs at positions 2198, 2201, 2205, 2208, 2211, and 2214. Residues 2198-2212 are compositionally biased toward low complexity; the sequence is SPPSEASSSASQLSA. The segment at 2214–2249 is ISDR; the sequence is SLRATCTAHAKNYAVEMVDANFFMGSDVTRIESETK. The segment at 2214–2275 is interaction with EIF2AK2/PKR; sequence SLRATCTAHA…REPSVPSEYL (62 aa). The segment at 2249 to 2306 is NS4B-binding; the sequence is KVLILDSLDPSVEEEDEREPSVPSEYLLPKKKFPQALPVWARPDYNPPVVETWKRPDY. The V3 stretch occupies residues 2299–2376; the sequence is ETWKRPDYDP…MDTTDATDQP (78 aa). Positions 2308–2328 are disordered; the sequence is PPTVSGCALPPRVTAPTPPPR. Residues 2322–2325 carry the SH3-binding motif; the sequence is APTP. A Nuclear localization signal motif is present at residues 2327–2335; sequence PRRRRALVL. Residue lysine 2350 forms a Glycyl lysine isopeptide (Lys-Gly) (interchain with G-Cter in ubiquitin) linkage. The disordered stretch occupies residues 2353 to 2431; the sequence is GQLPPSCDSG…PDLDSGSWST (79 aa). The segment covering 2361–2373 has biased composition (polar residues); sequence SGRSTGMDTTDAT. Residues serine 2471 and serine 2484 each carry the phosphoserine; by host modification. The 119-residue stretch at 2656–2774 folds into the RdRp catalytic domain; the sequence is PMGFSYDTRC…ISESQGAEED (119 aa). Mg(2+) contacts are provided by aspartate 2662, aspartate 2760, and aspartate 2761. The helical transmembrane segment at 3013–3033 threads the bilayer; it reads FLLLCLLLLSVGVGIFLLPAR.

This sequence belongs to the hepacivirus polyprotein family. Homooligomer. Interacts with E1 (via C-terminus). Interacts with the non-structural protein 5A. Interacts (via N-terminus) with host STAT1 (via SH2 domain); this interaction results in decreased STAT1 phosphorylation and ubiquitin-mediated proteasome-dependent STAT1 degradation, leading to decreased IFN-stimulated gene transcription. Interacts with host STAT3; this interaction constitutively activates STAT3. Interacts with host LTBR receptor. Interacts with host TNFRSF1A receptor and possibly induces apoptosis. Interacts with host HNRPK. Interacts with host YWHAE. Interacts with host UBE3A/E6AP. Interacts with host DDX3X. Interacts with host APOA2. Interacts with host RXRA protein. Interacts with host SP110 isoform 3/Sp110b; this interaction sequesters the transcriptional corepressor SP110 away from the nucleus. Interacts with host CREB3 nuclear transcription protein; this interaction triggers cell transformation. Interacts with host ACY3. Interacts with host C1QR1. Interacts with host RBM24; this interaction, which enhances the interaction of the mature core protein with 5'-UTR, may inhibit viral translation and favor replication. Interacts with host EIF2AK2/PKR; this interaction induces the autophosphorylation of EIF2AK2. Part of the viral assembly initiation complex composed of NS2, E1, E2, NS3, NS4A, NS5A and the mature core protein. As to quaternary structure, forms a heterodimer with envelope glycoprotein E2. Interacts with mature core protein. Interacts with protease NS2. The heterodimer E1/E2 interacts with host CLDN1; this interaction plays a role in viral entry into host cell. Interacts with host SPSB2 (via C-terminus). Part of the viral assembly initiation complex composed of NS2, E1, E2, NS3, NS4A, NS5A and the mature core protein. Interacts with host NEURL3; this interaction prevents E1 binding to glycoprotein E2. In terms of assembly, forms a heterodimer with envelope glycoprotein E1. Interacts with host CD81 and SCARB1 receptors; these interactions play a role in viral entry into host cell. Interacts with host EIF2AK2/PKR; this interaction inhibits EIF2AK2 and probably allows the virus to evade the innate immune response. Interacts with host CD209/DC-SIGN and CLEC4M/DC-SIGNR. Interact with host SPCS1; this interaction is essential for viral particle assembly. Interacts with protease NS2. The heterodimer E1/E2 interacts with host CLDN1; this interaction plays a role in viral entry into host cell. Part of the viral assembly initiation complex composed of NS2, E1, E2, NS3, NS4A, NS5A and the mature core protein. Interacts with host SLC3A2/4F2hc; the interaction may facilitate viral entry into host cell. Interacts with human PLSCR1. Homohexamer. Homoheptamer. Interacts with protease NS2. As to quaternary structure, homodimer. Interacts with host SPCS1; this interaction is essential for viral particle assembly. Interacts with envelope glycoprotein E1. Interacts with envelope glycoprotein E2. Interacts with viroporin p7. Interacts with serine protease/helicase NS3. Part of the replication complex composed of NS2, NS3, NS4A, NS4B, NS5A and the RNA-directed RNA polymerase embedded in an ER-derived membranous web. Part of the viral assembly initiation complex composed of NS2, E1, E2, NS3, NS4A, NS5A and the mature core protein. In terms of assembly, interacts with protease NS2. Interacts with non-structural protein 4A; this interaction stabilizes the folding of NS3 serine protease. NS3-NS4A interaction is essential for NS3 activation and allows membrane anchorage of the latter. NS3/NS4A complex also prevents phosphorylation of host IRF3, thus preventing the establishment of dsRNA induced antiviral state. Interacts with host MAVS; this interaction leads to the cleavage and inhibition of host MAVS. Interacts with host TICAM1; this interaction leads to the cleavage and inhibition of host TICAM1. Interacts with host TANK-binding kinase/TBK1; this interaction results in the inhibition of the association between TBK1 and IRF3, which leads to the inhibition of IRF3 activation. Interacts with host RBM24. Part of the replication complex composed of NS2, NS3, NS4A, NS4B, NS5A and the RNA-directed RNA polymerase embedded in an ER-derived membranous web. Part of the viral assembly initiation complex composed of NS2, E1, E2, NS3, NS4A, NS5A and the mature core protein. Interacts with NS3 serine protease; this interaction stabilizes the folding of NS3 serine protease. NS3-NS4A interaction is essential for NS3 activation and allows membrane anchorage of the latter. Interacts with non-structural protein 5A (via N-terminus). Part of the replication complex composed of NS2, NS3, NS4A, NS4B, NS5A and the RNA-directed RNA polymerase embedded in an ER-derived membranous web. Part of the viral assembly initiation complex composed of NS2, E1, E2, NS3, NS4A, NS5A and the mature core protein. As to quaternary structure, homomultimer. Interacts with non-structural protein NS5A. Interacts with host PLA2G4C; this interaction likely initiates the recruitment of replication complexes to lipid droplets. Interacts with host STING; this interaction disrupts the interaction between STING and TBK1 thereby suppressing the interferon signaling. Part of the replication complex composed of NS2, NS3, NS4A, NS4B, NS5A and the RNA-directed RNA polymerase embedded in an ER-derived membranous web. In terms of assembly, monomer. Homodimer; dimerization is required for RNA-binding. Interacts with the mature core protein. Interacts (via N-terminus) with non-structural protein 4A. Interacts with non-structural protein 4B. Interacts (via region D2) with RNA-directed RNA polymerase. Part of the viral assembly initiation complex composed of NS2, E1, E2, NS3, NS4A, NS5A and the mature core protein. Part of the replication complex composed of NS2, NS3, NS4A, NS4B, NS5A and the RNA-directed RNA polymerase embedded in an ER-derived membranous web. Interacts with host GRB2. Interacts with host BIN1. Interacts with host PIK3R1. Interacts with host SRCAP. Interacts with host FKBP8. Interacts (via C-terminus) with host VAPB (via MSP domain). Interacts with host EIF2AK2/PKR; this interaction leads to disruption of EIF2AK2 dimerization by NS5A and probably allows the virus to evade the innate immune response. Interacts (via N-terminus) with host PACSIN2 (via N-terminus); this interaction attenuates protein kinase C alpha-mediated phosphorylation of PACSIN2 by disrupting the interaction between PACSIN2 and PRKCA. Interacts (via N-terminus) with host SRC kinase (via SH2 domain). Interacts with most Src-family kinases. Interacts with host IFI27 and SKP2; promotes the ubiquitin-mediated proteasomal degradation of NS5A. Interacts with host GPS2. Interacts with host TNFRSF21; this interaction allows the modulation by the virus of JNK, p38 MAPK, STAT3, and Akt signaling pathways in a DR6-dependent manner. Interacts (via N-terminus) with host CIDEB (via N-terminus); this interaction seems to regulate the association of HCV particles with APOE. Interacts with host CHKA/Choline Kinase-alpha; CHKA bridges host PI4KA and NS5A and potentiates NS5A-stimulated PI4KA activity, which then facilitates the targeting of the ternary complex to the ER for viral replication. Interacts with host SPSB2 (via C-terminus); this interaction targets NS5A for ubiquitination and degradation. Interacts with host RAB18; this interaction may promote the association of NS5A and other replicase components with lipid droplets. Interacts (via region D2) with host PPIA/CYPA; the interaction stimulates RNA-binding ability of NS5A and is dependent on the peptidyl-prolyl cis-trans isomerase activity of PPIA/CYPA. Interacts with host TRIM14; this interaction induces the degradation of NS5A. Homooligomer. Interacts with non-structural protein 5A. Interacts with host VAPB. Interacts with host PRK2/PKN2. Interacts with host HNRNPA1 and SEPT6; these interactions facilitate viral replication. Part of the replication complex composed of NS2, NS3, NS4A, NS4B, NS5A and the RNA-directed RNA polymerase. It depends on Zn(2+) as a cofactor. The cofactor is Mg(2+). In terms of processing, specific enzymatic cleavages in vivo yield mature proteins. The structural proteins, core, E1, E2 and p7 are produced by proteolytic processing by host signal peptidases. The core protein precursor is synthesized as a 23 kDa, which is retained in the ER membrane through the hydrophobic signal peptide. Cleavage by the signal peptidase releases the 21 kDa mature core protein. The cleavage of the core protein precursor occurs between aminoacids 176 and 188 but the exact cleavage site is not known. Some degraded forms of the core protein appear as well during the course of infection. The other proteins (p7, NS2, NS3, NS4A, NS4B, NS5A and NS5B) are cleaved by the viral proteases. Autoprocessing between NS2 and NS3 is mediated by the NS2 cysteine protease catalytic domain and regulated by the NS3 N-terminal domain. Phosphorylated by host PKC and PKA. Post-translationally, ubiquitinated; mediated by UBE3A and leading to core protein subsequent proteasomal degradation. In terms of processing, highly N-glycosylated. Palmitoylation is required for NS2/3 autoprocessing and E2 recruitment to membranes. Post-translationally, palmitoylated. This modification may play a role in its polymerization or in protein-protein interactions. In terms of processing, phosphorylated on serines in a basal form termed p56. p58 is a hyperphosphorylated form of p56. p56 and p58 coexist in the cell in roughly equivalent amounts. Hyperphosphorylation is dependent on the presence of NS4A. Host CSNK1A1/CKI-alpha or RPS6KB1 kinases may be responsible for NS5A phosphorylation. Tyrosine phosphorylation is essential for the interaction with host SRC. Post-translationally, ubiquitinated. Ubiquitination, most probably at Lys-2350, mediated by host IFI27 and SKP2 leads to proteasomal degradation, restricting viral infection. Ubiquitination by host TRIM22 leads to interruption of viral replication. In terms of processing, the N-terminus is phosphorylated by host PRK2/PKN2.

Its subcellular location is the host endoplasmic reticulum membrane. The protein localises to the host mitochondrion membrane. It localises to the virion. It is found in the host cytoplasm. The protein resides in the host nucleus. Its subcellular location is the host lipid droplet. The protein localises to the virion membrane. It localises to the host mitochondrion. It is found in the host cell membrane. The protein resides in the host perinuclear region. The enzyme catalyses Hydrolysis of four peptide bonds in the viral precursor polyprotein, commonly with Asp or Glu in the P6 position, Cys or Thr in P1 and Ser or Ala in P1'.. It carries out the reaction a ribonucleoside 5'-triphosphate + H2O = a ribonucleoside 5'-diphosphate + phosphate + H(+). It catalyses the reaction ATP + H2O = ADP + phosphate + H(+). The catalysed reaction is RNA(n) + a ribonucleoside 5'-triphosphate = RNA(n+1) + diphosphate. Its activity is regulated as follows. Inhibited by the antiviral drug hexamethylene amiloride. Inhibition by amantadine appears to be genotype-dependent. Also inhibited by long-alkyl-chain iminosugar derivatives. With respect to regulation, activity is up-regulated by PRK2/PKN2-mediated phosphorylation. Its function is as follows. Packages viral RNA to form a viral nucleocapsid, and promotes virion budding. Participates in the viral particle production as a result of its interaction with the non-structural protein 5A. Binds RNA and may function as a RNA chaperone to induce the RNA structural rearrangements taking place during virus replication. Modulates viral translation initiation by interacting with viral IRES and 40S ribosomal subunit. Affects various cell signaling pathways, host immunity and lipid metabolism. Prevents the establishment of cellular antiviral state by blocking the interferon-alpha/beta (IFN-alpha/beta) and IFN-gamma signaling pathways and by blocking the formation of phosphorylated STAT1 and promoting ubiquitin-mediated proteasome-dependent degradation of STAT1. Activates STAT3 leading to cellular transformation. Regulates the activity of cellular genes, including c-myc and c-fos. May repress the promoter of p53, and sequester CREB3 and SP110 isoform 3/Sp110b in the cytoplasm. Represses cell cycle negative regulating factor CDKN1A, thereby interrupting an important check point of normal cell cycle regulation. Targets transcription factors involved in the regulation of inflammatory responses and in the immune response: suppresses TNF-induced NF-kappa-B activation, and activates AP-1. Binds to dendritic cells (DCs) via C1QR1, resulting in down-regulation of T-lymphocytes proliferation. Alters lipid metabolism by interacting with hepatocellular proteins involved in lipid accumulation and storage. Induces up-regulation of FAS promoter activity, and thereby contributes to the increased triglyceride accumulation in hepatocytes (steatosis). In terms of biological role, forms a heterodimer with envelope glycoprotein E2, which mediates virus attachment to the host cell, virion internalization through clathrin-dependent endocytosis and fusion with host membrane. Fusion with the host cell is most likely mediated by both E1 and E2, through conformational rearrangements of the heterodimer required for fusion rather than a classical class II fusion mechanism. E1/E2 heterodimer binds host apolipoproteins such as APOB and ApoE thereby forming a lipo-viro-particle (LVP). APOE associated to the LVP allows the initial virus attachment to cell surface receptors such as the heparan sulfate proteoglycans (HSPGs), syndecan-1 (SDC1), syndecan-1 (SDC2), the low-density lipoprotein receptor (LDLR) and scavenger receptor class B type I (SCARB1). The cholesterol transfer activity of SCARB1 allows E2 exposure and binding of E2 to SCARB1 and the tetraspanin CD81. E1/E2 heterodimer binding on CD81 activates the epithelial growth factor receptor (EGFR) signaling pathway. Diffusion of the complex E1-E2-EGFR-SCARB1-CD81 to the cell lateral membrane allows further interaction with Claudin 1 (CLDN1) and occludin (OCLN) to finally trigger HCV entry. Forms a heterodimer with envelope glycoprotein E1, which mediates virus attachment to the host cell, virion internalization through clathrin-dependent endocytosis and fusion with host membrane. Fusion with the host cell is most likely mediated by both E1 and E2, through conformational rearrangements of the heterodimer required for fusion rather than a classical class II fusion mechanism. The interaction between envelope glycoprotein E2 and host apolipoprotein E/APOE allows the proper assembly, maturation and infectivity of the viral particles. This interaction is probably promoted via the up-regulation of cellular autophagy by the virus. E1/E2 heterodimer binds host apolipoproteins such as APOB and APOE thereby forming a lipo-viro-particle (LVP). APOE associated to the LVP allows the initial virus attachment to cell surface receptors such as the heparan sulfate proteoglycans (HSPGs), syndecan-1 (SDC1), syndecan-1 (SDC2), the low-density lipoprotein receptor (LDLR) and scavenger receptor class B type I (SCARB1). The cholesterol transfer activity of SCARB1 allows E2 exposure and binding of E2 to SCARB1 and the tetraspanin CD81. E1/E2 heterodimer binding on CD81 activates the epithelial growth factor receptor (EGFR) signaling pathway. Diffusion of the complex E1-E2-EGFR-SCARB1-CD81 to the cell lateral membrane allows further interaction with Claudin 1 (CLDN1) and occludin (OCLN) to finally trigger HCV entry. Inhibits host EIF2AK2/PKR activation, preventing the establishment of an antiviral state. Viral ligand for CD209/DC-SIGN and CLEC4M/DC-SIGNR, which are respectively found on dendritic cells (DCs), and on liver sinusoidal endothelial cells and macrophage-like cells of lymph node sinuses. These interactions allow the capture of circulating HCV particles by these cells and subsequent facilitated transmission to permissive cells such as hepatocytes and lymphocyte subpopulations. The interaction between E2 and host amino acid transporter complex formed by SLC3A2 and SLC7A5/LAT1 may facilitate viral entry into host cell. Functionally, ion channel protein that acts as a viroporin and plays an essential role in the assembly, envelopment and secretion of viral particles. Regulates the host cell secretory pathway, which induces the intracellular retention of viral glycoproteins and favors assembly of viral particles. Creates a pore in acidic organelles and releases Ca(2+) and H(+) in the cytoplasm of infected cells, leading to a productive viral infection. High levels of cytoplasmic Ca(2+) may trigger membrane trafficking and transport of viral ER-associated proteins to viroplasms, sites of viral genome replication. This ionic imbalance induces the assembly of the inflammasome complex, which triggers the maturation of pro-IL-1beta into IL-1beta through the action of caspase-1. Targets also host mitochondria and induces mitochondrial depolarization. In addition of its role as a viroporin, acts as a lipid raft adhesion factor. Its function is as follows. Cysteine protease required for the proteolytic auto-cleavage between the non-structural proteins NS2 and NS3. The N-terminus of NS3 is required for the function of NS2 protease (active region NS2-3). Promotes the initiation of viral particle assembly by mediating the interaction between structural and non-structural proteins. In terms of biological role, displays three enzymatic activities: serine protease with a chymotrypsin-like fold, NTPase and RNA helicase. NS3 serine protease, in association with NS4A, is responsible for the cleavages of NS3-NS4A, NS4A-NS4B, NS4B-NS5A and NS5A-NS5B. The NS3/NS4A complex prevents phosphorylation of host IRF3, thus preventing the establishment of dsRNA induced antiviral state. The NS3/NS4A complex induces host amino acid transporter component SLC3A2, thus contributing to HCV propagation. NS3 RNA helicase binds to RNA and unwinds both dsDNA and dsRNA in the 3' to 5' direction, and likely resolves RNA complicated stable secondary structures in the template strand. Binds a single ATP and catalyzes the unzipping of a single base pair of dsRNA. Inhibits host antiviral proteins TBK1 and IRF3 thereby preventing the establishment of an antiviral state. Cleaves host MAVS/CARDIF thereby preventing the establishment of an antiviral state. Cleaves host TICAM1/TRIF, thereby disrupting TLR3 signaling and preventing the establishment of an antiviral state. Peptide cofactor which forms a non-covalent complex with the N-terminal of NS3 serine protease. The NS3/NS4A complex prevents phosphorylation of host IRF3, thus preventing the establishment of dsRNA induced antiviral state. The NS3/NS4A complex induces host amino acid transporter component SLC3A2, thus contributing to HCV propagation. Functionally, induces a specific membrane alteration that serves as a scaffold for the virus replication complex. This membrane alteration gives rise to the so-called ER-derived membranous web that contains the replication complex. NS4B self-interaction contributes to its function in membranous web formation. Promotes host TRIF protein degradation in a CASP8-dependent manner thereby inhibiting host TLR3-mediated interferon signaling. Disrupts the interaction between STING and TBK1 contributing to the inhibition of interferon signaling. Its function is as follows. Phosphorylated protein that is indispensable for viral replication and assembly. Both hypo- and hyperphosphorylated states are required for the viral life cycle. The hyperphosphorylated form of NS5A is an inhibitor of viral replication. Involved in RNA-binding and especially in binding to the viral genome. Zinc is essential for RNA-binding. Participates in the viral particle production as a result of its interaction with the mature viral core protein. Its interaction with host VAPB may target the viral replication complex to vesicles. Down-regulates viral IRES translation initiation. Mediates interferon resistance, presumably by interacting with and inhibiting host EIF2AK2/PKR. Prevents BIN1-induced apoptosis. Acts as a transcriptional activator of some host genes important for viral replication when localized in the nucleus. Via the interaction with host PACSIN2, modulates lipid droplet formation in order to promote virion assembly. Modulates TNFRSF21/DR6 signaling pathway for viral propagation. In terms of biological role, RNA-dependent RNA polymerase that performs primer-template recognition and RNA synthesis during viral replication. Initiates RNA transcription/replication at a flavin adenine dinucleotide (FAD), resulting in a 5'- FAD cap on viral RNAs. In this way, recognition of viral 5' RNA by host pattern recognition receptors can be bypassed, thereby evading activation of antiviral pathways. This Hepatitis C virus genotype 2k (isolate VAT96) (HCV) protein is Genome polyprotein.